We begin with the raw amino-acid sequence, 465 residues long: Glycine--tRNA ligase (465 aa).

Positions 98 and 174 each coordinate substrate. ATP-binding positions include 206 to 208 (RNE), 216 to 221 (FRTREF), 290 to 291 (EL), and 334 to 337 (GADR). A substrate-binding site is contributed by 221-225 (FEQME). 330-334 (EPSLG) contributes to the substrate binding site.

The protein belongs to the class-II aminoacyl-tRNA synthetase family. Homodimer.

The protein resides in the cytoplasm. It catalyses the reaction tRNA(Gly) + glycine + ATP = glycyl-tRNA(Gly) + AMP + diphosphate. Functionally, catalyzes the attachment of glycine to tRNA(Gly). This is Glycine--tRNA ligase from Agathobacter rectalis (strain ATCC 33656 / DSM 3377 / JCM 17463 / KCTC 5835 / VPI 0990) (Eubacterium rectale).